Reading from the N-terminus, the 188-residue chain is 3-hydroxyanthranilate 3,4-dioxygenase 2 (188 aa).

Arginine 46 provides a ligand contact to O2. Fe cation contacts are provided by histidine 50, glutamate 70, and histidine 108. Position 70 (glutamate 70) interacts with substrate. 2 residues coordinate substrate: arginine 112 and glutamate 122.

It belongs to the 3-HAO family. Requires Fe(2+) as cofactor.

It localises to the cytoplasm. The enzyme catalyses 3-hydroxyanthranilate + O2 = (2Z,4Z)-2-amino-3-carboxymuconate 6-semialdehyde. It participates in cofactor biosynthesis; NAD(+) biosynthesis; quinolinate from L-kynurenine: step 3/3. Catalyzes the oxidative ring opening of 3-hydroxyanthranilate to 2-amino-3-carboxymuconate semialdehyde, which spontaneously cyclizes to quinolinate. The polypeptide is 3-hydroxyanthranilate 3,4-dioxygenase 2 (bna1-2) (Aspergillus fumigatus (strain CBS 144.89 / FGSC A1163 / CEA10) (Neosartorya fumigata)).